Here is a 318-residue protein sequence, read N- to C-terminus: Acyl-CoA dehydrogenase IpdE2 (318 aa).

FAD-binding residues include Arg210 and Gly277.

Belongs to the acyl-CoA dehydrogenase family. In terms of assembly, heterotetramer composed of 2 IpdE1 subunits and 2 IpdE2 subunits. FAD is required as a cofactor.

It catalyses the reaction 3-[(3aS,4S,5R,7aS)-5-hydroxy-7a-methyl-1-oxo-octahydro-1H-inden-4-yl]propanoyl-CoA + A = (2E)-3-[(3aS,4S,5R,7aS)-5-hydroxy-7a-methyl-1-oxo-octahydro-1H-inden-4-yl]prop-2-enoyl-CoA + AH2. Its pathway is steroid metabolism; cholesterol degradation. Functionally, involved in cholesterol degradation. Catalyzes the dehydrogenation of 5OH-HIP-CoA to 5OH-HIPE-CoA. Can also use octanoyl-CoA and dihydroferuloyl-CoA, with lower efficiency. Cannot use 3-oxo-4-pregnene-20-carboxyl-CoA (3-OPC-CoA). This is Acyl-CoA dehydrogenase IpdE2 from Mycobacterium tuberculosis (strain ATCC 25618 / H37Rv).